We begin with the raw amino-acid sequence, 489 residues long: Rhamnulokinase (489 aa).

13 to 17 (ASSGR) provides a ligand contact to ATP. A disulfide bridge links Cys-68 with Cys-222. Substrate contacts are provided by residues Gly-83 and 236–238 (HDT). Asp-237 functions as the Proton acceptor in the catalytic mechanism. Thr-259 lines the ATP pocket. Residue Asn-296 coordinates substrate. Gln-304 contributes to the ATP binding site. Cys-353 and Cys-370 form a disulfide bridge. Position 402 (Gly-402) interacts with ATP. Cys-413 and Cys-417 are disulfide-bonded.

This sequence belongs to the rhamnulokinase family. Monomer. Requires Mg(2+) as cofactor.

The enzyme catalyses L-rhamnulose + ATP = L-rhamnulose 1-phosphate + ADP + H(+). It functions in the pathway carbohydrate degradation; L-rhamnose degradation; glycerone phosphate from L-rhamnose: step 2/3. Functionally, involved in the catabolism of L-rhamnose (6-deoxy-L-mannose). Catalyzes the transfer of the gamma-phosphate group from ATP to the 1-hydroxyl group of L-rhamnulose to yield L-rhamnulose 1-phosphate. The sequence is that of Rhamnulokinase from Escherichia coli (strain K12 / DH10B).